Reading from the N-terminus, the 423-residue chain is Serine--tRNA ligase (423 aa).

231–233 is a binding site for L-serine; sequence TGE. Residue 262-264 participates in ATP binding; that stretch reads RQE. L-serine is bound at residue Glu-285. Position 349 to 352 (349 to 352) interacts with ATP; sequence EISS. Ser-385 provides a ligand contact to L-serine.

The protein belongs to the class-II aminoacyl-tRNA synthetase family. Type-1 seryl-tRNA synthetase subfamily. As to quaternary structure, homodimer. The tRNA molecule binds across the dimer.

The protein localises to the cytoplasm. The catalysed reaction is tRNA(Ser) + L-serine + ATP = L-seryl-tRNA(Ser) + AMP + diphosphate + H(+). The enzyme catalyses tRNA(Sec) + L-serine + ATP = L-seryl-tRNA(Sec) + AMP + diphosphate + H(+). It functions in the pathway aminoacyl-tRNA biosynthesis; selenocysteinyl-tRNA(Sec) biosynthesis; L-seryl-tRNA(Sec) from L-serine and tRNA(Sec): step 1/1. In terms of biological role, catalyzes the attachment of serine to tRNA(Ser). Is also able to aminoacylate tRNA(Sec) with serine, to form the misacylated tRNA L-seryl-tRNA(Sec), which will be further converted into selenocysteinyl-tRNA(Sec). The protein is Serine--tRNA ligase of Phytoplasma mali (strain AT).